Reading from the N-terminus, the 319-residue chain is Oligopeptide transport ATP-binding protein OppF (319 aa).

One can recognise an ABC transporter domain in the interval 5-255 (LNLKDLKVYY…PQHIYTKRLL (251 aa)). Residue 48–55 (GESGSGKS) coordinates ATP.

Belongs to the ABC transporter superfamily. The complex is composed of two ATP-binding proteins (OppD and OppF), two transmembrane proteins (OppB and OppC) and a solute-binding protein (OppA).

It is found in the cell membrane. It catalyses the reaction a [peptide](out) + ATP + H2O = a [peptide](in) + ADP + phosphate + H(+). Its function is as follows. Part of the ABC transporter complex OppABCDF involved in the uptake of oligopeptides. Probably responsible for energy coupling to the transport system. Essential for uptake of peptides larger than three amino acids and for growth in milk. The protein is Oligopeptide transport ATP-binding protein OppF (oppF) of Lactococcus lactis subsp. lactis (strain IL1403) (Streptococcus lactis).